The sequence spans 721 residues: uncharacterized protein (721 aa).

Disordered regions lie at residues 196-291 (TSMT…VGGP) and 370-513 (AGIP…AAEQ). 2 stretches are compositionally biased toward low complexity: residues 202–224 (SPAG…TSGP) and 232–250 (SPFG…SSGP). Pro residues-rich tracts occupy residues 264–283 (PMPP…PPSA) and 379–389 (APTPSPAPIAP). Positions 419–429 (APAGPLPAYGA) are enriched in low complexity. Pro residues predominate over residues 435–446 (VTTPPATPPTPT). Positions 470 to 484 (VNKSTAPATTQAQPS) are enriched in polar residues. Positions 491–505 (ASATAAATTGAAAGD) are enriched in low complexity.

This is an uncharacterized protein from Mycobacterium tuberculosis (strain ATCC 25618 / H37Rv).